Reading from the N-terminus, the 362-residue chain is Biotin synthase (362 aa).

A disordered region spans residues 14 to 39 (AQRTPEPLPPTSQGLARPSHDVVRGP). In terms of domain architecture, Radical SAM core spans 87–316 (HKGGPAALCG…ARDILVCGGR (230 aa)). [4Fe-4S] cluster-binding residues include Cys-105, Cys-109, and Cys-112. Residues Cys-181 and Cys-241 each coordinate [2Fe-2S] cluster.

This sequence belongs to the radical SAM superfamily. Biotin synthase family. Homodimer. [4Fe-4S] cluster is required as a cofactor. It depends on [2Fe-2S] cluster as a cofactor.

It catalyses the reaction (4R,5S)-dethiobiotin + (sulfur carrier)-SH + 2 reduced [2Fe-2S]-[ferredoxin] + 2 S-adenosyl-L-methionine = (sulfur carrier)-H + biotin + 2 5'-deoxyadenosine + 2 L-methionine + 2 oxidized [2Fe-2S]-[ferredoxin]. It participates in cofactor biosynthesis; biotin biosynthesis; biotin from 7,8-diaminononanoate: step 2/2. In terms of biological role, catalyzes the conversion of dethiobiotin (DTB) to biotin by the insertion of a sulfur atom into dethiobiotin via a radical-based mechanism. This chain is Biotin synthase, found in Nitratidesulfovibrio vulgaris (strain ATCC 29579 / DSM 644 / CCUG 34227 / NCIMB 8303 / VKM B-1760 / Hildenborough) (Desulfovibrio vulgaris).